Here is a 109-residue protein sequence, read N- to C-terminus: Small ribosomal subunit protein bS6 (109 aa).

This sequence belongs to the bacterial ribosomal protein bS6 family.

In terms of biological role, binds together with bS18 to 16S ribosomal RNA. The polypeptide is Small ribosomal subunit protein bS6 (Anaplasma marginale (strain St. Maries)).